The chain runs to 60 residues: UPF0434 protein HCH_02705 (60 aa).

This sequence belongs to the UPF0434 family.

This Hahella chejuensis (strain KCTC 2396) protein is UPF0434 protein HCH_02705.